The chain runs to 236 residues: 2-C-methyl-D-erythritol 4-phosphate cytidylyltransferase (236 aa).

Belongs to the IspD/TarI cytidylyltransferase family. IspD subfamily. In terms of assembly, homodimer.

The catalysed reaction is 2-C-methyl-D-erythritol 4-phosphate + CTP + H(+) = 4-CDP-2-C-methyl-D-erythritol + diphosphate. Its pathway is isoprenoid biosynthesis; isopentenyl diphosphate biosynthesis via DXP pathway; isopentenyl diphosphate from 1-deoxy-D-xylulose 5-phosphate: step 2/6. In terms of biological role, catalyzes the formation of 4-diphosphocytidyl-2-C-methyl-D-erythritol from CTP and 2-C-methyl-D-erythritol 4-phosphate (MEP). This Escherichia coli O157:H7 protein is 2-C-methyl-D-erythritol 4-phosphate cytidylyltransferase.